The following is a 314-amino-acid chain: Jacalin-related lectin 9 (314 aa).

A signal peptide spans 1–23; it reads MIFIYIFLFLSSAIIDSNGFAMA. 2 Jacalin-type lectin domains span residues 24 to 165 and 168 to 313; these read QKLE…YLTK and PTKS…YFSP.

The protein belongs to the jacalin lectin family.

This is Jacalin-related lectin 9 (JAL9) from Arabidopsis thaliana (Mouse-ear cress).